A 901-amino-acid polypeptide reads, in one-letter code: MutS protein homolog 5 (901 aa).

643–650 contacts ATP; that stretch reads GANASGKS.

It belongs to the DNA mismatch repair MutS family. Heterooligomer of MSH4 and MSH5.

Functionally, involved in meiotic recombination. Facilitate crossovers between homologs during meiosis. In Saccharomyces cerevisiae (strain ATCC 204508 / S288c) (Baker's yeast), this protein is MutS protein homolog 5 (MSH5).